Consider the following 323-residue polypeptide: GTP 3',8-cyclase (323 aa).

The Radical SAM core domain maps to 4–226 (TFQRQINYLR…LEPFPDLATN (223 aa)). Arg13 is a binding site for GTP. Residues Cys20 and Cys24 each coordinate [4Fe-4S] cluster. Position 26 (Tyr26) interacts with S-adenosyl-L-methionine. A [4Fe-4S] cluster-binding site is contributed by Cys27. Arg63 is a binding site for GTP. Gly67 lines the S-adenosyl-L-methionine pocket. Thr94 contacts GTP. Ser118 lines the S-adenosyl-L-methionine pocket. Lys155 provides a ligand contact to GTP. Met189 is an S-adenosyl-L-methionine binding site. 2 residues coordinate [4Fe-4S] cluster: Cys252 and Cys255. Residue 257–259 (RLR) participates in GTP binding. [4Fe-4S] cluster is bound at residue Cys269.

It belongs to the radical SAM superfamily. MoaA family. Monomer and homodimer. Requires [4Fe-4S] cluster as cofactor.

The enzyme catalyses GTP + AH2 + S-adenosyl-L-methionine = (8S)-3',8-cyclo-7,8-dihydroguanosine 5'-triphosphate + 5'-deoxyadenosine + L-methionine + A + H(+). It participates in cofactor biosynthesis; molybdopterin biosynthesis. Functionally, catalyzes the cyclization of GTP to (8S)-3',8-cyclo-7,8-dihydroguanosine 5'-triphosphate. The protein is GTP 3',8-cyclase of Moorella thermoacetica (strain ATCC 39073 / JCM 9320).